We begin with the raw amino-acid sequence, 125 residues long: Photoactive yellow protein (125 aa).

In terms of domain architecture, PAS spans 23-86 (LDGLAFGAIQ…GKFKEGVASG (64 aa)). Cys69 carries the post-translational modification S-(4-hydroxycinnamyl)cysteine.

Belongs to the photoactive yellow protein family. In terms of assembly, monomer. In terms of processing, the 4-hydroxycinnamic acid (p-coumaric acid) chromophore is covalently bound via a thioester linkage.

Functionally, photoactive blue light protein. Probably functions as a photoreceptor for a negative phototaxis response. In Halorhodospira halophila (Ectothiorhodospira halophila), this protein is Photoactive yellow protein (pyp).